We begin with the raw amino-acid sequence, 377 residues long: 23S rRNA (uracil(747)-C(5))-methyltransferase RlmC (377 aa).

Residues Cys-3, Cys-11, Cys-14, and Cys-87 each contribute to the [4Fe-4S] cluster site. Residues Gln-212, Phe-241, Glu-262, and Asn-307 each contribute to the S-adenosyl-L-methionine site. Cys-334 functions as the Nucleophile in the catalytic mechanism.

It belongs to the class I-like SAM-binding methyltransferase superfamily. RNA M5U methyltransferase family. RlmC subfamily.

The catalysed reaction is uridine(747) in 23S rRNA + S-adenosyl-L-methionine = 5-methyluridine(747) in 23S rRNA + S-adenosyl-L-homocysteine + H(+). Its function is as follows. Catalyzes the formation of 5-methyl-uridine at position 747 (m5U747) in 23S rRNA. In Proteus mirabilis (strain HI4320), this protein is 23S rRNA (uracil(747)-C(5))-methyltransferase RlmC.